The chain runs to 195 residues: FK506-binding protein 2 (195 aa).

The signal sequence occupies residues 1 to 19 (MKAALFLSALASTAVGVVA). One can recognise a PPIase FKBP-type domain in the interval 39–127 (GDGVHMHYRG…VFETELVGID (89 aa)). A Prevents secretion from ER motif is present at residues 192–195 (HEEL).

This sequence belongs to the FKBP-type PPIase family. FKBP2 subfamily.

Its subcellular location is the endoplasmic reticulum. The enzyme catalyses [protein]-peptidylproline (omega=180) = [protein]-peptidylproline (omega=0). Its activity is regulated as follows. Inhibited by both FK506 and rapamycin. In terms of biological role, PPIases accelerate the folding of proteins. It catalyzes the cis-trans isomerization of proline imidic peptide bonds in oligopeptides. This chain is FK506-binding protein 2 (FPR2), found in Gibberella zeae (strain ATCC MYA-4620 / CBS 123657 / FGSC 9075 / NRRL 31084 / PH-1) (Wheat head blight fungus).